The primary structure comprises 75 residues: Putative membrane protein insertion efficiency factor (75 aa).

The protein belongs to the UPF0161 family.

Its subcellular location is the cell inner membrane. In terms of biological role, could be involved in insertion of integral membrane proteins into the membrane. This chain is Putative membrane protein insertion efficiency factor, found in Gloeothece citriformis (strain PCC 7424) (Cyanothece sp. (strain PCC 7424)).